A 664-amino-acid polypeptide reads, in one-letter code: DNA ligase (664 aa).

NAD(+) is bound by residues 32-36 (DKEYD) and 80-81 (SL). Lysine 122 acts as the N6-AMP-lysine intermediate in catalysis. 3 residues coordinate NAD(+): arginine 144, glutamate 178, and lysine 314. Zn(2+) is bound by residues cysteine 407, cysteine 410, cysteine 423, and cysteine 429. The BRCT domain maps to 587 to 664 (IDENPFMDKT…NEEEFSNKIK (78 aa)).

This sequence belongs to the NAD-dependent DNA ligase family. LigA subfamily. Requires Mg(2+) as cofactor. The cofactor is Mn(2+).

It carries out the reaction NAD(+) + (deoxyribonucleotide)n-3'-hydroxyl + 5'-phospho-(deoxyribonucleotide)m = (deoxyribonucleotide)n+m + AMP + beta-nicotinamide D-nucleotide.. Its function is as follows. DNA ligase that catalyzes the formation of phosphodiester linkages between 5'-phosphoryl and 3'-hydroxyl groups in double-stranded DNA using NAD as a coenzyme and as the energy source for the reaction. It is essential for DNA replication and repair of damaged DNA. This is DNA ligase from Clostridium botulinum (strain Loch Maree / Type A3).